Reading from the N-terminus, the 119-residue chain is Large ribosomal subunit protein bL20 (119 aa).

It belongs to the bacterial ribosomal protein bL20 family.

Functionally, binds directly to 23S ribosomal RNA and is necessary for the in vitro assembly process of the 50S ribosomal subunit. It is not involved in the protein synthesizing functions of that subunit. In Deinococcus geothermalis (strain DSM 11300 / CIP 105573 / AG-3a), this protein is Large ribosomal subunit protein bL20.